Consider the following 543-residue polypeptide: CTP synthase (543 aa).

Residues 1–266 (MKTNYIFVTG…DDYICERFSL (266 aa)) form an amidoligase domain region. A CTP-binding site is contributed by Ser-14. Ser-14 is a UTP binding site. ATP contacts are provided by residues 15 to 20 (SLGKGI) and Asp-72. The Mg(2+) site is built by Asp-72 and Glu-140. CTP contacts are provided by residues 147 to 149 (DIE), 187 to 192 (KTKPTQ), and Lys-223. UTP contacts are provided by residues 187–192 (KTKPTQ) and Lys-223. 239 to 241 (KDV) is a binding site for ATP. A Glutamine amidotransferase type-1 domain is found at 291–538 (TVGIVGKYID…IKAASEYQKK (248 aa)). Residue Gly-352 participates in L-glutamine binding. The Nucleophile; for glutamine hydrolysis role is filled by Cys-379. Residues 380-383 (LGMQ), Glu-403, and Arg-466 contribute to the L-glutamine site. Catalysis depends on residues His-511 and Glu-513.

Belongs to the CTP synthase family. As to quaternary structure, homotetramer.

It catalyses the reaction UTP + L-glutamine + ATP + H2O = CTP + L-glutamate + ADP + phosphate + 2 H(+). The catalysed reaction is L-glutamine + H2O = L-glutamate + NH4(+). It carries out the reaction UTP + NH4(+) + ATP = CTP + ADP + phosphate + 2 H(+). Its pathway is pyrimidine metabolism; CTP biosynthesis via de novo pathway; CTP from UDP: step 2/2. With respect to regulation, allosterically activated by GTP, when glutamine is the substrate; GTP has no effect on the reaction when ammonia is the substrate. The allosteric effector GTP functions by stabilizing the protein conformation that binds the tetrahedral intermediate(s) formed during glutamine hydrolysis. Inhibited by the product CTP, via allosteric rather than competitive inhibition. Catalyzes the ATP-dependent amination of UTP to CTP with either L-glutamine or ammonia as the source of nitrogen. Regulates intracellular CTP levels through interactions with the four ribonucleotide triphosphates. This is CTP synthase from Baumannia cicadellinicola subsp. Homalodisca coagulata.